A 1382-amino-acid chain; its full sequence is ATP-dependent RNA helicase TDRD9 (1382 aa).

The segment at 36–62 (AAREEVQRQDVAPGAGPAAQAPALAQA) is disordered. The span at 47–62 (APGAGPAAQAPALAQA) shows a compositional bias: low complexity. The 167-residue stretch at 142–308 (VSLIESNSVV…FAVPVQNKMN (167 aa)) folds into the Helicase ATP-binding domain. Residue 155 to 162 (GATGSGKS) participates in ATP binding. The DEAH box signature appears at 254 to 257 (DEVH). The 168-residue stretch at 377–544 (SGAQFVLERS…ILKVKLLDMG (168 aa)) folds into the Helicase C-terminal domain. The Tudor domain occupies 944–1004 (HPHPDLVCLA…MEIPCQFLEL (61 aa)).

Belongs to the DEAD box helicase family. DEAH subfamily. In terms of assembly, interacts with piRNA-associated proteins PIWIL1 and PIWIL4.

Its subcellular location is the cytoplasm. The protein resides in the nucleus. The enzyme catalyses ATP + H2O = ADP + phosphate + H(+). Its function is as follows. ATP-binding RNA helicase required during spermatogenesis. Required to repress transposable elements and prevent their mobilization, which is essential for the germline integrity. Acts via the piRNA metabolic process, which mediates the repression of transposable elements during meiosis by forming complexes composed of piRNAs and Piwi proteins and governs the methylation and subsequent repression of transposons. Acts downstream of piRNA biogenesis: exclusively required for transposon silencing in the nucleus, suggesting that it acts as a nuclear effector in the nucleus together with PIWIL4. This chain is ATP-dependent RNA helicase TDRD9, found in Homo sapiens (Human).